A 510-amino-acid chain; its full sequence is NAD(P)H-quinone oxidoreductase subunit 2, chloroplastic (510 aa).

12 consecutive transmembrane segments (helical) span residues 24–44 (LLLFHGSFIFPECILIFGLIL), 59–79 (WFYFISSTSLIISITALLFRW), 99–119 (IFQFLILLCSTLCIPLSVEYI), 124–144 (MAITEFLLFVLTATLGGMFLC), 149–169 (LITIFVAPECFSLCSYLLSGY), 183–203 (YLLMGGASSSILVHGFSWLYG), 229–249 (ISIALISITVGIGFKLSPAPF), 295–315 (WHLLLEILAILSMILGNLIAI), 323–343 (MLAYSSIGQIGYVIIGIIVGD), 354–374 (YMLFYISMNLGTFACIVLFGL), 395–415 (ALSSALCLLSLGGLPPLAGFF), and 418–438 (LHLFWCGWQAGLYFLVSIGLL).

It belongs to the complex I subunit 2 family. NDH is composed of at least 16 different subunits, 5 of which are encoded in the nucleus.

It is found in the plastid. The protein resides in the chloroplast thylakoid membrane. It carries out the reaction a plastoquinone + NADH + (n+1) H(+)(in) = a plastoquinol + NAD(+) + n H(+)(out). The catalysed reaction is a plastoquinone + NADPH + (n+1) H(+)(in) = a plastoquinol + NADP(+) + n H(+)(out). Its function is as follows. NDH shuttles electrons from NAD(P)H:plastoquinone, via FMN and iron-sulfur (Fe-S) centers, to quinones in the photosynthetic chain and possibly in a chloroplast respiratory chain. The immediate electron acceptor for the enzyme in this species is believed to be plastoquinone. Couples the redox reaction to proton translocation, and thus conserves the redox energy in a proton gradient. This Ensete ventricosum (Abyssinian banana) protein is NAD(P)H-quinone oxidoreductase subunit 2, chloroplastic.